We begin with the raw amino-acid sequence, 365 residues long: NADH-quinone oxidoreductase subunit H 2 (365 aa).

8 helical membrane-spanning segments follow: residues 1–21, 71–91, 100–120, 136–156, 199–219, 254–274, 301–321, and 342–362; these read MFVV…VVWA, LAPV…PFAP, VGVF…FLAG, IAQV…VVLI, FVSW…VFFI, ILFL…VVLF, IAGY…VVFL, and WKIL…WVVW.

Belongs to the complex I subunit 1 family. In terms of assembly, NDH-1 is composed of 14 different subunits. Subunits NuoA, H, J, K, L, M, N constitute the membrane sector of the complex.

The protein resides in the cell inner membrane. It catalyses the reaction a quinone + NADH + 5 H(+)(in) = a quinol + NAD(+) + 4 H(+)(out). Its function is as follows. NDH-1 shuttles electrons from NADH, via FMN and iron-sulfur (Fe-S) centers, to quinones in the respiratory chain. The immediate electron acceptor for the enzyme in this species is believed to be ubiquinone. Couples the redox reaction to proton translocation (for every two electrons transferred, four hydrogen ions are translocated across the cytoplasmic membrane), and thus conserves the redox energy in a proton gradient. This subunit may bind ubiquinone. The protein is NADH-quinone oxidoreductase subunit H 2 of Cytophaga hutchinsonii (strain ATCC 33406 / DSM 1761 / CIP 103989 / NBRC 15051 / NCIMB 9469 / D465).